We begin with the raw amino-acid sequence, 99 residues long: Keratinocyte differentiation-associated protein (99 aa).

Residues 1–22 (MKIPVLPAVVLLSLLALHSAQG) form the signal peptide.

As to expression, highly expressed in skin, but not detectable in any other tissue examined. Expression restricted to cornified/stratified epithelia and not detected in non-cornified/stratified epithelia.

Its subcellular location is the secreted. May act as a soluble regulator of keratinocyte differentiation. May play an important role in embryonic skin morphogenesis. This Canis lupus familiaris (Dog) protein is Keratinocyte differentiation-associated protein.